The sequence spans 279 residues: Probable endonuclease 4 (279 aa).

9 residues coordinate Zn(2+): His-67, His-107, Glu-144, Asp-177, His-180, His-214, Asp-227, His-229, and Glu-259.

Belongs to the AP endonuclease 2 family. The cofactor is Zn(2+).

The enzyme catalyses Endonucleolytic cleavage to 5'-phosphooligonucleotide end-products.. Endonuclease IV plays a role in DNA repair. It cleaves phosphodiester bonds at apurinic or apyrimidinic (AP) sites, generating a 3'-hydroxyl group and a 5'-terminal sugar phosphate. This chain is Probable endonuclease 4, found in Sulfurihydrogenibium sp. (strain YO3AOP1).